Consider the following 308-residue polypeptide: 1D-myo-inositol 2-acetamido-2-deoxy-alpha-D-glucopyranoside deacetylase (308 aa).

Zn(2+)-binding residues include H37, D40, and H171.

It belongs to the MshB deacetylase family. Zn(2+) is required as a cofactor.

The catalysed reaction is 1D-myo-inositol 2-acetamido-2-deoxy-alpha-D-glucopyranoside + H2O = 1D-myo-inositol 2-amino-2-deoxy-alpha-D-glucopyranoside + acetate. Its function is as follows. Catalyzes the deacetylation of 1D-myo-inositol 2-acetamido-2-deoxy-alpha-D-glucopyranoside (GlcNAc-Ins) in the mycothiol biosynthesis pathway. In Mycobacterium sp. (strain KMS), this protein is 1D-myo-inositol 2-acetamido-2-deoxy-alpha-D-glucopyranoside deacetylase.